We begin with the raw amino-acid sequence, 1061 residues long: DNA polymerase (1061 aa).

Positions 773-792 are disordered; that stretch reads NSEAEESDEDQGPAPFYSPP.

Belongs to the DNA polymerase type-B family. In terms of assembly, heterodimer with the terminal protein; this heterodimer binds to bp 9 to 18 of the genome. Forms a complex with viral pTP, DBP and hosts NFIA and POU2F1/OCT1 for initiation of replication.

The protein resides in the host nucleus. The enzyme catalyses DNA(n) + a 2'-deoxyribonucleoside 5'-triphosphate = DNA(n+1) + diphosphate. Its function is as follows. Eukaryotic-type DNA polymerase involved in viral genomic replication. DNA synthesis is protein primed, and acts in a strand displacement replication. Assembles in complex with viral pTP, DBP, host NFIA and host POU2F1/OCT1 on viral origin of replication. The polymerase covalently transfers dCMP onto pTP, thereby initiating complementary strand synthesis. This is DNA polymerase from Human adenovirus A serotype 12 (HAdV-12).